Here is a 464-residue protein sequence, read N- to C-terminus: 3-isopropylmalate dehydratase large subunit (464 aa).

The [4Fe-4S] cluster site is built by Cys-337, Cys-397, and Cys-400.

It belongs to the aconitase/IPM isomerase family. LeuC type 1 subfamily. As to quaternary structure, heterodimer of LeuC and LeuD. The cofactor is [4Fe-4S] cluster.

It catalyses the reaction (2R,3S)-3-isopropylmalate = (2S)-2-isopropylmalate. The protein operates within amino-acid biosynthesis; L-leucine biosynthesis; L-leucine from 3-methyl-2-oxobutanoate: step 2/4. Functionally, catalyzes the isomerization between 2-isopropylmalate and 3-isopropylmalate, via the formation of 2-isopropylmaleate. This is 3-isopropylmalate dehydratase large subunit from Bacillus cereus (strain ATCC 14579 / DSM 31 / CCUG 7414 / JCM 2152 / NBRC 15305 / NCIMB 9373 / NCTC 2599 / NRRL B-3711).